A 328-amino-acid polypeptide reads, in one-letter code: Cytochrome c biogenesis protein CcsA (328 aa).

8 helical membrane passes run 15 to 35 (FLVL…PSVP), 37 to 57 (LQAL…ALLG), 68 to 88 (ISNL…AHLI), 97 to 117 (LVGV…ALTL), 142 to 162 (VMML…AFLF), 236 to 256 (IIGL…VWAN), 271 to 291 (WALI…TKGW), and 297 to 317 (AILA…VNLL).

This sequence belongs to the CcmF/CycK/Ccl1/NrfE/CcsA family. May interact with ccs1.

The protein resides in the cellular thylakoid membrane. In terms of biological role, required during biogenesis of c-type cytochromes (cytochrome c6 and cytochrome f) at the step of heme attachment. The protein is Cytochrome c biogenesis protein CcsA of Gloeothece citriformis (strain PCC 7424) (Cyanothece sp. (strain PCC 7424)).